We begin with the raw amino-acid sequence, 315 residues long: Ribosomal RNA small subunit methyltransferase H (315 aa).

Positions Met-1–Glu-21 are disordered. S-adenosyl-L-methionine contacts are provided by residues Gly-51 to His-53, Asp-69, Phe-96, Asp-117, and Gln-124. Positions Lys-281–Ala-315 are disordered.

The protein belongs to the methyltransferase superfamily. RsmH family.

It localises to the cytoplasm. The catalysed reaction is cytidine(1402) in 16S rRNA + S-adenosyl-L-methionine = N(4)-methylcytidine(1402) in 16S rRNA + S-adenosyl-L-homocysteine + H(+). Its function is as follows. Specifically methylates the N4 position of cytidine in position 1402 (C1402) of 16S rRNA. The chain is Ribosomal RNA small subunit methyltransferase H from Sorangium cellulosum (strain So ce56) (Polyangium cellulosum (strain So ce56)).